The chain runs to 595 residues: Alpha-1,3-galactosidase B (595 aa).

An N-terminal signal peptide occupies residues 1-22; sequence MKTILLFALSLLLSLSVSDVCA. PbH1 repeat units follow at residues 432-454, 455-477, and 488-541; these read TPEV…LFST, PKKT…LLCG, and CRDV…VIED.

It belongs to the glycosyl hydrolase 110 family. B subfamily.

The catalysed reaction is Hydrolysis of terminal, non-reducing branched (1-&gt;3)-alpha-D-galactosidic residues, producing free D-galactose.. The enzyme catalyses Hydrolysis of terminal, non-reducing linear (1-&gt;3)-alpha-D-galactosidic residues, producing free D-galactose.. It catalyses the reaction Hydrolysis of terminal, non-reducing alpha-D-galactose residues in alpha-D-galactosides, including galactose oligosaccharides, galactomannans and galactolipids.. Its function is as follows. Alpha-galactosidase. Removes both branched alpha-1,3-linked galactose residues of blood group B antigens and linear alpha-1,3-linked galactose structures. The polypeptide is Alpha-1,3-galactosidase B (glaB) (Bacteroides fragilis (strain ATCC 25285 / DSM 2151 / CCUG 4856 / JCM 11019 / LMG 10263 / NCTC 9343 / Onslow / VPI 2553 / EN-2)).